Here is a 395-residue protein sequence, read N- to C-terminus: S-adenosylmethionine synthase (395 aa).

His-18 serves as a coordination point for ATP. Asp-20 serves as a coordination point for Mg(2+). A K(+)-binding site is contributed by Glu-46. 2 residues coordinate L-methionine: Glu-59 and Gln-103. The interval 103 to 113 (QSADIAVGVDS) is flexible loop. Residues 170–172 (DAK), Asp-244, 250–251 (RK), Ala-267, and Lys-271 contribute to the ATP site. Asp-244 lines the L-methionine pocket. Residue Lys-275 coordinates L-methionine.

This sequence belongs to the AdoMet synthase family. Homotetramer; dimer of dimers. Requires Mg(2+) as cofactor. The cofactor is K(+).

The protein localises to the cytoplasm. It catalyses the reaction L-methionine + ATP + H2O = S-adenosyl-L-methionine + phosphate + diphosphate. It participates in amino-acid biosynthesis; S-adenosyl-L-methionine biosynthesis; S-adenosyl-L-methionine from L-methionine: step 1/1. Functionally, catalyzes the formation of S-adenosylmethionine (AdoMet) from methionine and ATP. The overall synthetic reaction is composed of two sequential steps, AdoMet formation and the subsequent tripolyphosphate hydrolysis which occurs prior to release of AdoMet from the enzyme. This Gluconacetobacter diazotrophicus (strain ATCC 49037 / DSM 5601 / CCUG 37298 / CIP 103539 / LMG 7603 / PAl5) protein is S-adenosylmethionine synthase.